A 433-amino-acid chain; its full sequence is Alpha-(1,3)-fucosyltransferase 4 (433 aa).

Positions methionine 1–valine 20 are disordered. Topologically, residues methionine 1–serine 54 are cytoplasmic. The helical; Signal-anchor for type II membrane protein transmembrane segment at serine 55 to glycine 74 threads the bilayer. Topologically, residues glutamine 75–arginine 433 are lumenal. 2 N-linked (GlcNAc...) asparagine glycosylation sites follow: asparagine 117 and asparagine 218.

Belongs to the glycosyltransferase 10 family. In adult, highest expression in spleen, testis, brain, lung, kidney and skeletal muscle and to a lesser extent in liver and heart.

The protein localises to the golgi apparatus. It is found in the golgi stack membrane. The enzyme catalyses a beta-D-galactosyl-(1-&gt;4)-N-acetyl-beta-D-glucosaminyl derivative + GDP-beta-L-fucose = a beta-D-galactosyl-(1-&gt;4)-[alpha-L-fucosyl-(1-&gt;3)]-N-acetyl-beta-D-glucosaminyl derivative + GDP + H(+). The catalysed reaction is an N-acetyl-alpha-neuraminyl-(2-&gt;3)-beta-D-galactosyl-(1-&gt;4)-N-acetyl-beta-D-glucosaminyl derivative + GDP-beta-L-fucose = an alpha-Neu5Ac-(2-&gt;3)-beta-D-Gal-(1-&gt;4)-[alpha-L-Fuc-(1-&gt;3)]-beta-D-GlcNAc derivative + GDP + H(+). It catalyses the reaction an alpha-Neu5Ac-(2-&gt;3)-beta-D-Gal-(1-&gt;4)-beta-D-GlcNAc-(1-&gt;3)-beta-D-Gal-(1-&gt;4)-beta-D-GlcNAc derivative + GDP-beta-L-fucose = an alpha-Neu5Ac-(2-&gt;3)-beta-D-Gal-(1-&gt;4)-beta-D-GlcNAc-(1-&gt;3)-beta-D-Gal-(1-&gt;4)-[alpha-L-Fuc-(1-&gt;3)]-beta-D-GlcNAc derivative + GDP + H(+). It carries out the reaction an alpha-Neu5Ac-(2-&gt;3)-beta-D-Gal-(1-&gt;4)-beta-D-GlcNAc6S derivative + GDP-beta-L-fucose = an alpha-Neu5Ac-(2-&gt;3)-beta-D-Gal-(1-&gt;4)-[alpha-L-Fuc-(1-&gt;3)]-beta-D-GlcNAc6S derivative + GDP + H(+). It participates in protein modification; protein glycosylation. Functionally, catalyzes alpha(1-&gt;3) linkage of fucosyl moiety transferred from GDP-beta-L-fucose to N-acetyl glucosamine (GlcNAc) within type 2 lactosamine (LacNAc, Gal-beta(1-&gt;4)GlcNAc) glycan attached to N- or O-linked glycoproteins. Robustly fucosylates nonsialylated distal LacNAc unit of the polylactosamine chain to form Lewis X antigen (CD15), a glycan determinant known to mediate important cellular functions in development and immunity. Fucosylates with lower efficiency sialylated LacNAc acceptors to form sialyl Lewis X and 6-sulfo sialyl Lewis X determinants that serve as recognition epitopes for C-type lectins. Together with FUT7 contributes to SELE, SELL and SELP selectin ligand biosynthesis and selectin-dependent lymphocyte homing, leukocyte migration and blood leukocyte homeostasis. In a cell type specific manner, may also fucosylate the internal LacNAc unit of the polylactosamine chain to form VIM-2 antigen that serves as recognition epitope for SELE. The sequence is that of Alpha-(1,3)-fucosyltransferase 4 (Fut4) from Rattus norvegicus (Rat).